Reading from the N-terminus, the 285-residue chain is Methyltransferase grgD (285 aa).

This sequence belongs to the methyltransferase superfamily. LaeA methyltransferase family.

The protein operates within secondary metabolite biosynthesis. Its function is as follows. Methyltransferase; part of the gene cluster that mediates the biosynthesis of gregatin A, a fungal polyketide featuring an alkylated furanone core. The PKS grgA synthesizes C11 and C4 polyketide chains in the presence and absence of the trans-enoyl reductase grgB, respectively. The polyketide transferase grgF is then responsible for the fusion of the two carbon chains to produce the furanone skeleton of gregatin A. Next, the cytochrome P450 monooxygenase grgG accepts performs the oxidative cyclization to furnish the gregatin scaffold and leads to the formation of desmethylgregatin A. Finally, the O-methyltransferase grgD methylates the carboxyl group of desmethylgregatin A to provide gregatin A. The polypeptide is Methyltransferase grgD (Penicillium sp).